A 561-amino-acid polypeptide reads, in one-letter code: Potassium-transporting ATPase potassium-binding subunit (561 aa).

A run of 10 helical transmembrane segments spans residues 4-24 (IVMQ…PLGI), 65-85 (AVSV…VLML), 133-153 (IGLT…LFAV), 177-197 (LYIL…QGVV), 253-273 (FTNL…VVMF), 285-305 (AIMT…TISE), 380-400 (GLYG…LLVG), 417-437 (MVCL…AVAV), 484-504 (MVGA…ALYL), and 528-548 (FIGL…LPAL).

It belongs to the KdpA family. In terms of assembly, the system is composed of three essential subunits: KdpA, KdpB and KdpC.

It is found in the cell membrane. In terms of biological role, part of the high-affinity ATP-driven potassium transport (or Kdp) system, which catalyzes the hydrolysis of ATP coupled with the electrogenic transport of potassium into the cytoplasm. This subunit binds the extracellular potassium ions and delivers the ions to the membrane domain of KdpB through an intramembrane tunnel. This Listeria monocytogenes serotype 4b (strain F2365) protein is Potassium-transporting ATPase potassium-binding subunit.